A 392-amino-acid polypeptide reads, in one-letter code: Stilbene synthase 4 (392 aa).

55–58 (KFNR) is a substrate binding site. Cysteine 164 is a catalytic residue. Residues leucine 267 and 305 to 307 (GGP) contribute to the substrate site.

Belongs to the thiolase-like superfamily. Chalcone/stilbene synthases family. Homodimer.

It is found in the cytoplasm. It catalyses the reaction 4-coumaroyl-CoA + 3 malonyl-CoA + 3 H(+) = trans-resveratrol + 4 CO2 + 4 CoA. The protein operates within phytoalexin biosynthesis; 3,4',5-trihydroxystilbene biosynthesis; 3,4',5-trihydroxystilbene from trans-4-coumarate: step 2/2. Its function is as follows. Mediates resistance to pathogens which are sensitive to stilbenes. This Vitis vinifera (Grape) protein is Stilbene synthase 4.